Here is a 200-residue protein sequence, read N- to C-terminus: Recombination protein RecR (200 aa).

The C4-type zinc finger occupies 60 to 75 (CVYCQALTEDDVCNIC). One can recognise a Toprim domain in the interval 83 to 177 (TKLCIIESML…KISRIGFGVP (95 aa)).

Belongs to the RecR family.

Functionally, may play a role in DNA repair. It seems to be involved in an RecBC-independent recombinational process of DNA repair. It may act with RecF and RecO. This is Recombination protein RecR from Francisella tularensis subsp. tularensis (strain WY96-3418).